Consider the following 149-residue polypeptide: Large ribosomal subunit protein bL9 (149 aa).

Belongs to the bacterial ribosomal protein bL9 family.

Functionally, binds to the 23S rRNA. This chain is Large ribosomal subunit protein bL9, found in Edwardsiella ictaluri (strain 93-146).